Reading from the N-terminus, the 180-residue chain is Adenine phosphoribosyltransferase (180 aa).

Position 2 is an N-acetylalanine (Ala-2). Residues Ser-4, Ser-15, and Ser-30 each carry the phosphoserine modification. A Phosphotyrosine modification is found at Tyr-60. At Ser-66 the chain carries Phosphoserine. N6-acetyllysine is present on Lys-114. Position 135 is a phosphothreonine (Thr-135).

Belongs to the purine/pyrimidine phosphoribosyltransferase family. As to quaternary structure, homodimer.

The protein localises to the cytoplasm. It catalyses the reaction AMP + diphosphate = 5-phospho-alpha-D-ribose 1-diphosphate + adenine. It participates in purine metabolism; AMP biosynthesis via salvage pathway; AMP from adenine: step 1/1. Its function is as follows. Catalyzes a salvage reaction resulting in the formation of AMP, that is energically less costly than de novo synthesis. The sequence is that of Adenine phosphoribosyltransferase from Cricetulus griseus (Chinese hamster).